Here is a 306-residue protein sequence, read N- to C-terminus: Ribonuclease HIII (306 aa).

The RNase H type-2 domain occupies 87–302; it reads WSVVGSDEVG…TKKAEALAKK (216 aa). Residues Asp93, Glu94, and Asp196 each contribute to the a divalent metal cation site.

This sequence belongs to the RNase HII family. RnhC subfamily. The cofactor is Mn(2+). Mg(2+) serves as cofactor.

It is found in the cytoplasm. The catalysed reaction is Endonucleolytic cleavage to 5'-phosphomonoester.. In terms of biological role, endonuclease that specifically degrades the RNA of RNA-DNA hybrids. This is Ribonuclease HIII from Exiguobacterium sibiricum (strain DSM 17290 / CCUG 55495 / CIP 109462 / JCM 13490 / 255-15).